The chain runs to 332 residues: MREDTKVYDITIIGGGPVGLFTAFYGGMRQASVKIIESLPQLGGQLSALYPEKYIYDVAGFPKIRAQELVDNLKEQMAKFDQTVCLEQAVESVEKQADGIFKLVTNKEIHYSKTVIITAGNGAFQPRKLELESAAQFENANLHYFIDDLNQFAGKRVAVLGGGDSAVDWALMLEPIAKEVSIIHRRDKFRAHEHSVENLRNSKVNVLTPFVPTELIGSERIEQIVIEEVKGERKEIIDVDDVIVNFGFVSSLGPIKNWGLEIEKNSIVVKSTMETNIEGFYAAGDICTYEGKVKLIASGFGEAPTAVNNAKAYMDPKARVQPLHSTSMFENK.

Positions 37, 45, 50, 90, 124, 285, and 326 each coordinate FAD.

This sequence belongs to the ferredoxin--NADP reductase type 2 family. In terms of assembly, homodimer. FAD serves as cofactor.

It carries out the reaction 2 reduced [2Fe-2S]-[ferredoxin] + NADP(+) + H(+) = 2 oxidized [2Fe-2S]-[ferredoxin] + NADPH. This chain is Ferredoxin--NADP reductase 2, found in Bacillus licheniformis (strain ATCC 14580 / DSM 13 / JCM 2505 / CCUG 7422 / NBRC 12200 / NCIMB 9375 / NCTC 10341 / NRRL NRS-1264 / Gibson 46).